The sequence spans 110 residues: UPF0122 protein spr1167 (110 aa).

It belongs to the UPF0122 family.

In terms of biological role, might take part in the signal recognition particle (SRP) pathway. This is inferred from the conservation of its genetic proximity to ftsY/ffh. May be a regulatory protein. This is UPF0122 protein spr1167 from Streptococcus pneumoniae (strain ATCC BAA-255 / R6).